The sequence spans 64 residues: Conotoxin Pu3.5 (64 aa).

Positions 1–16 (LGVLLTICLLLFPLTA) are cleaved as a signal peptide. A propeptide spanning residues 17–49 (VPLDGDQPADQPAGRMQDDISSEQHPFFDPVKR) is cleaved from the precursor. Cystine bridges form between Cys-50-Cys-63, Cys-51-Cys-58, and Cys-54-Cys-62.

Belongs to the conotoxin M superfamily. As to expression, expressed by the venom duct.

It is found in the secreted. The protein is Conotoxin Pu3.5 of Conus pulicarius (Flea-bitten cone).